Consider the following 354-residue polypeptide: DNA integrity scanning protein DisA (354 aa).

The DAC domain maps to 6-144 (DDELKKILKI…GDIKYVLRDS (139 aa)). ATP is bound by residues Gly-73, Leu-91, and 104–108 (TRHRT).

The protein belongs to the DisA family. As to quaternary structure, homooctamer. Requires Mg(2+) as cofactor.

It catalyses the reaction 2 ATP = 3',3'-c-di-AMP + 2 diphosphate. Participates in a DNA-damage check-point that is active prior to asymmetric division when DNA is damaged. DisA forms globular foci that rapidly scan along the chromosomes during sporulation, searching for lesions. When a lesion is present, DisA pauses at the lesion site. This triggers a cellular response that culminates in a temporary block in sporulation initiation. Its function is as follows. Also has diadenylate cyclase activity, catalyzing the condensation of 2 ATP molecules into cyclic di-AMP (c-di-AMP). c-di-AMP acts as a signaling molecule that couples DNA integrity with progression of sporulation. The rise in c-di-AMP level generated by DisA while scanning the chromosome, operates as a positive signal that advances sporulation; upon encountering a lesion, the DisA focus arrests at the damaged site and halts c-di-AMP synthesis. The sequence is that of DNA integrity scanning protein DisA from Clostridium perfringens (strain SM101 / Type A).